A 435-amino-acid chain; its full sequence is E3 ubiquitin-protein ligase RING1 (435 aa).

Residues 46-86 (CPICLDMLKKTMTTKECLHRFCSDCIVTALRSGNKECPTCR) form an RING-type zinc finger. The tract at residues 144–322 (KLQSQNRPQR…TEGEGNGELG (179 aa)) is disordered. Over residues 157 to 170 (KGGGGGGGGGGNGN) the composition is skewed to gly residues. 4 stretches are compositionally biased toward low complexity: residues 171–188 (GAAN…TAVG), 202–211 (SNDSNSNTNS), 222–251 (SGTS…TSAT), and 259–278 (SNPP…SSSS). The residue at position 202 (Ser202) is a Phosphoserine. Phosphoserine is present on Ser266. The residue at position 267 (Thr267) is a Phosphothreonine. Ser269 carries the phosphoserine modification. A compositionally biased stretch (acidic residues) spans 309–322 (SNIDTEGEGNGELG).

Interacts with ORD. Component of PRC1 complex, which contains many PcG proteins like Pc, ph, Scm, Psc, Sce and also chromatin remodeling proteins such as histone deacetylases. This complex is distinct from the Esc/E(z) complex, at least composed of esc, E(z), Su(z)12, HDAC1/Rpd3 and Caf1-55. The two complexes however cooperate and interact together during the first 3 hours of development to establish PcG silencing. In terms of tissue distribution, ubiquitously expressed in syncytial blastoderm embryos. Ubiquitously expressed until stage 11. Then, it is only expressed in the neuroectoderm. Later in embryonic development, it is only expressed in the CNS. In larvae, it is expressed in all imaginal disks. Expressed in the male and female gonads.

The protein resides in the nucleus. It is found in the chromosome. The enzyme catalyses S-ubiquitinyl-[E2 ubiquitin-conjugating enzyme]-L-cysteine + [acceptor protein]-L-lysine = [E2 ubiquitin-conjugating enzyme]-L-cysteine + N(6)-ubiquitinyl-[acceptor protein]-L-lysine.. The protein operates within protein modification; protein ubiquitination. In terms of biological role, E3 ubiquitin-protein ligase that mediates monoubiquitination of 'Lys-118' of histone H2A, thereby playing a central role in histone code and gene regulation. H2A 'Lys-118' ubiquitination gives a specific tag for epigenetic transcriptional repression. Polycomb group (PcG) protein. PcG proteins act by forming multiprotein complexes, which are required to maintain the transcriptionally repressive state of homeotic genes throughout development. PcG proteins are not required to initiate repression, but to maintain it during later stages of development. PcG complexes act via modification of histones, such as methylation, deacetylation, ubiquitination rendering chromatin heritably changed in its expressibility. May play a role in meiotic sister chromatid cohesion. The chain is E3 ubiquitin-protein ligase RING1 (Sce) from Drosophila melanogaster (Fruit fly).